An 843-amino-acid chain; its full sequence is Protein MEI2-like 2 (843 aa).

RRM domains are found at residues 198–271 (RTLF…FSIP) and 283–356 (GTLV…LSRP).

Its function is as follows. Probable RNA-binding protein that plays a role in meiosis and vegetative growth. In Arabidopsis thaliana (Mouse-ear cress), this protein is Protein MEI2-like 2 (ML2).